A 620-amino-acid chain; its full sequence is Endoglucanase 6 (620 aa).

The first 22 residues, 1–22 (MEKFAPVAALLLLLLCFPVAFS), serve as a signal peptide directing secretion. D78 (nucleophile) is an active-site residue. Active-site residues include H411, D463, and E472. Residues N554 and N564 are each glycosylated (N-linked (GlcNAc...) asparagine).

The protein belongs to the glycosyl hydrolase 9 (cellulase E) family.

Its subcellular location is the secreted. It catalyses the reaction Endohydrolysis of (1-&gt;4)-beta-D-glucosidic linkages in cellulose, lichenin and cereal beta-D-glucans.. This is Endoglucanase 6 from Arabidopsis thaliana (Mouse-ear cress).